Consider the following 499-residue polypeptide: Cytosol aminopeptidase (499 aa).

2 residues coordinate Mn(2+): Lys267 and Asp272. The active site involves Lys279. The Mn(2+) site is built by Asp290, Asp349, and Glu351. The active site involves Arg353.

This sequence belongs to the peptidase M17 family. Requires Mn(2+) as cofactor.

It localises to the cytoplasm. The catalysed reaction is Release of an N-terminal amino acid, Xaa-|-Yaa-, in which Xaa is preferably Leu, but may be other amino acids including Pro although not Arg or Lys, and Yaa may be Pro. Amino acid amides and methyl esters are also readily hydrolyzed, but rates on arylamides are exceedingly low.. It carries out the reaction Release of an N-terminal amino acid, preferentially leucine, but not glutamic or aspartic acids.. Its function is as follows. Presumably involved in the processing and regular turnover of intracellular proteins. Catalyzes the removal of unsubstituted N-terminal amino acids from various peptides. This is Cytosol aminopeptidase (pepA) from Buchnera aphidicola subsp. Acyrthosiphon pisum (strain APS) (Acyrthosiphon pisum symbiotic bacterium).